We begin with the raw amino-acid sequence, 719 residues long: High-osmolarity-induced transcription protein 1 (719 aa).

Positions 68 to 88 (HISPTTGSESASGSNASTLRN) are enriched in polar residues. Disordered stretches follow at residues 68-90 (HISP…RNDG), 102-159 (AAIS…NEIS), 353-402 (THQQ…ASAA), and 496-610 (TTSE…TKPN). The span at 117-127 (IGEKLSNEERV) shows a compositional bias: basic and acidic residues. A compositionally biased stretch (low complexity) spans 128-143 (NSNVSASNSTTAGTGR). 4 stretches are compositionally biased toward polar residues: residues 144-159 (MLSQ…NEIS), 353-369 (THQQ…NAST), 387-398 (TQSNNNASTNDH), and 496-522 (TTSE…STLP). Residues Ser-146 and Ser-153 each carry the phosphoserine modification. Acidic residues predominate over residues 535 to 572 (DDDGYQEDDDDDGDDEGDGRDNEEDSTAEEDEVDDEIE). Residues 581–601 (NKRRRSLHHKKSNSLNGRRKL) are compositionally biased toward basic residues.

Belongs to the HOT1 family. As to quaternary structure, interacts with HOG1. Hyperphosphorylated during acute stress.

The protein resides in the nucleus. Functionally, required for a complete transcriptional response to osmotic stress, through recruitment of HOG1 followed by pol II recruitment to the promoters of GPD1 and other HOG-dependent genes. In Saccharomyces cerevisiae (strain ATCC 204508 / S288c) (Baker's yeast), this protein is High-osmolarity-induced transcription protein 1 (HOT1).